Reading from the N-terminus, the 23-residue chain is U3-ctenitoxin-Co1a (23 aa).

Cystine bridges form between Cys2–Cys17 and Cys9–Cys22.

In terms of tissue distribution, expressed by the venom gland.

The protein localises to the secreted. Antagonist of L-type calcium channels (Cav1/CACNA1). The sequence is that of U3-ctenitoxin-Co1a from Ctenus ornatus (Brazilian spider).